A 134-amino-acid polypeptide reads, in one-letter code: Ribonuclease VapC11 (134 aa).

Residues 2–126 enclose the PINc domain; it reads ILIDTSAWVE…ADFDVIARIT (125 aa). Mg(2+)-binding residues include D5 and D98.

Belongs to the PINc/VapC protein family. It depends on Mg(2+) as a cofactor.

In terms of biological role, toxic component of a type II toxin-antitoxin (TA) system. Acts as an RNase. Its toxic effects on cell growth and colony formation are neutralized by coexpression with cognate antitoxin VapB11. The chain is Ribonuclease VapC11 from Mycobacterium tuberculosis (strain CDC 1551 / Oshkosh).